The sequence spans 399 residues: Arylacetamide deacetylase (399 aa).

Topologically, residues 1-4 (MRKK) are cytoplasmic. A helical; Signal-anchor for type II membrane protein transmembrane segment spans residues 5–25 (YFGFLILGVLLAGYIYVPLPD). Residues 26–399 (NVEEPWKIML…QYINWLHENL (374 aa)) lie on the Lumenal side of the membrane. Positions 111–113 (HGG) match the Involved in the stabilization of the negatively charged intermediate by the formation of the oxyanion hole motif. A disulfide bridge links Cys-116 with Cys-340. Ser-189 is a catalytic residue. N-linked (GlcNAc...) asparagine glycosylation occurs at Asn-282. Catalysis depends on residues Asp-343 and His-373.

It belongs to the 'GDXG' lipolytic enzyme family.

It localises to the endoplasmic reticulum membrane. Its subcellular location is the microsome membrane. The enzyme catalyses a triacylglycerol + H2O = a diacylglycerol + a fatty acid + H(+). In terms of biological role, displays cellular triglyceride lipase activity in liver, increases the levels of intracellular fatty acids derived from the hydrolysis of newly formed triglyceride stores and plays a role in very low-density lipoprotein assembly. Displays serine esterase activity in liver. Deacetylates a variety of arylacetamide substrates, including xenobiotic compounds and procarcinogens, converting them to the primary arylamide compounds and increasing their toxicity. The chain is Arylacetamide deacetylase (AADAC) from Bos taurus (Bovine).